The chain runs to 440 residues: Sequestosome-1 (440 aa).

An N-acetylalanine modification is found at Ala2. An interaction with LCK region spans residues Ala2–Arg50. Residues Ser3 to Lys102 form the PB1 domain. Ser24 is subject to Phosphoserine. The segment at Pro43 to Arg107 is interaction with PRKCZ and dimerization. Residues Arg50–Asp80 are interaction with PAWR. Lys91 participates in a covalent cross-link: Glycyl lysine isopeptide (Lys-Gly) (interchain with G-Cter in ubiquitin). The segment at Val122 to Ser224 is interaction with GABRR3. The segment at His123–Gly173 adopts a ZZ-type zinc-finger fold. The Zn(2+) site is built by Cys128, Cys131, Cys142, and Cys145. Tyr148 is modified (phosphotyrosine). Residues Cys151, Cys154, His160, and His163 each coordinate Zn(2+). Ser170 and Ser176 each carry phosphoserine. The interval Ser170–Pro220 is LIM protein-binding (LB). A Glycyl lysine isopeptide (Lys-Gly) (interchain with G-Cter in ubiquitin) cross-link involves residue Lys189. The interval Pro196–Asn235 is disordered. Residues Ser207, Ser233, Ser249, and Ser266 each carry the phosphoserine modification. The short motif at Pro228–Ser233 is the TRAF6-binding element. The tract at residues Lys264–Ala390 is disordered. Residue Thr269 is modified to Phosphothreonine. The tract at residues Thr269–Leu440 is interaction with NTRK1. A phosphoserine mark is found at Ser272 and Ser282. The span at Ser283 to Pro296 shows a compositional bias: low complexity. S-palmitoyl cysteine attachment occurs at residues Cys289 and Cys290. At Ser306 the chain carries Phosphoserine. Basic and acidic residues predominate over residues Gln310–Glu324. Positions Arg321–Ser342 are MAP1LC3B-binding. A phosphoserine mark is found at Ser328 and Ser332. The LIR signature appears at Asp336–Leu341. A compositionally biased stretch (basic and acidic residues) spans Asp337–Asp347. Positions Asp347–Glu352 are interaction with KEAP1. Ser349 carries the phosphoserine; by ULK1 modification. Positions Gly351 to Gly373 are enriched in polar residues. 4 positions are modified to phosphoserine: Ser355, Ser361, Ser365, and Ser366. The UBA domain occupies Glu389 to Ser434. A Phosphoserine; by CK2, ULK1 and TBK1 modification is found at Ser403. Ser407 is modified (phosphoserine; by ULK1). An N6-acetyllysine; alternate mark is found at Lys420 and Lys435. Residue Lys420 forms a Glycyl lysine isopeptide (Lys-Gly) (interchain with G-Cter in ubiquitin); alternate linkage. Lys435 participates in a covalent cross-link: Glycyl lysine isopeptide (Lys-Gly) (interchain with G-Cter in SUMO2); alternate.

In terms of assembly, homooligomer or heterooligomer; may form homotypic arrays. Dimerization interferes with ubiquitin binding. Component of a ternary complex with PAWR and PRKCZ. Forms a complex with JUB/Ajuba, PRKCZ and TRAF6. Identified in a complex with TRAF6 and CYLD. Identified in a heterotrimeric complex with ubiquitin and ZFAND5, where ZFAND5 and SQSTM1 both interact with the same ubiquitin molecule. Interacts (via LIR motif) with MAP1LC3A and MAP1LC3B, as well as with other ATG8 family members, including GABARAP, GABARAPL1 and GABARAPL2; these interactions are necessary for the recruitment MAP1 LC3 family members to inclusion bodies containing polyubiquitinated protein aggregates and for their degradation by autophagy. Interacts directly with PRKCI and PRKCZ. Interacts with EBI3, LCK, RASA1, NR2F2, NTRK1, NTRK2, NTRK3, NBR1, MAP2K5 and MAPKAPK5. Upon TNF-alpha stimulation, interacts with RIPK1 probably bridging IKBKB to the TNF-R1 complex composed of TNF-R1/TNFRSF1A, TRADD and RIPK1. Interacts with the proteasome subunits PSMD4 and PSMC2. Interacts with TRAF6. Interacts with 'Lys-63'-linked polyubiquitinated MAPT/TAU. Interacts with FHOD3. Interacts with CYLD. Interacts with SESN1. Interacts with SESN2. Interacts with ULK1. Interacts with UBD. Interacts with WDR81; the interaction is direct and regulates the interaction of SQSTM1 with ubiquitinated proteins. Interacts with WDFY3; this interaction is required to recruit WDFY3 to cytoplasmic bodies and to PML bodies. Interacts with LRRC25. Interacts with STING1; leading to relocalization of STING1 to autophagosomes. Interacts (when phosphorylated at Ser-349) with KEAP1; the interaction is direct and inactivates the BCR(KEAP1) complex by sequestering KEAP1 in inclusion bodies, promoting its degradation. Interacts with MOAP1; promoting dissociation of SQSTM1 inclusion bodies that sequester KEAP1. Interacts with GBP1. Interacts with TAX1BP1. Interacts with (ubiquitinated) PEX5; specifically binds PEX5 ubiquitinated at 'Lys-209' in response to reactive oxygen species (ROS). Interacts (via PB1 domain) with TNS2; the interaction leads to sequestration of TNS2 in cytoplasmic aggregates with SQSTM1 and promotes TNS2 ubiquitination and proteasomal degradation. Interacts with IRS1; the interaction is disrupted by the presence of tensin TNS2. Interacts with TRIM5. Interacts with TRIM11 (when ubiquitinated); promoting AIM2 recruitment to autophagosomes and autophagy-dependent degradation of AIM2. Interacts with TRIM13. Interacts with TRIM16. Interacts with TRIM23. Interacts with TRIM50. Interacts with TRIM55. Interacts with ECSIT; this interaction inhibits TLR4 signaling via functional regulation of the TRAF6-ECSIT complex. Interacts with GABRR1, GABRR2 and GABRR3. Interacts with WDR83. Interacts with GRB2. Interacts with USP12; the interaction is independent of USP12 deubiquitinase activity and may be involved in regulation of autophagic flux. Interacts with ASB6. In terms of processing, phosphorylation at Ser-407 by ULK1 destabilizes the UBA dimer interface and increases binding affinity to ubiquitinated proteins. Phosphorylation at Ser-407 also primes for subsequent phosphorylation at Ser-403. Phosphorylation at Ser-403 by CK2 or ULK1 promotes binding to ubiquitinated proteins by increasing the affinity between the UBA domain and polyubiquitin chains. Phosphorylation at Ser-403 by ULK1 is stimulated by SESN2. Phosphorylated at Ser-403 by TBK1, leading to promote relocalization of 'Lys-63'-linked ubiquitinated STING1 to autophagosomes. Phosphorylation at Ser-349 by ULK1 promotes interaction with KEAP1 and inactivation of the BCR(KEAP1) complex, promoting NFE2L2/NRF2 nuclear accumulation and expression of phase II detoxifying enzymes. Phosphorylated in vitro by TTN. Ubiquitinated by UBE2J1 and RNF26 at Lys-435: ubiquitinated SQSTM1 attracts specific vesicle-associated adapters, forming a molecular bridge that restrains cognate vesicles in the perinuclear region and organizes the endosomal pathway for efficient cargo transport. Ubiquitination by UBE2D2 and UBE2D3 increases its ability to bind polyubiquitin chains by destabilizing the UBA dimer interface. Deubiquitination by USP15 releases target vesicles for fast transport into the cell periphery. Ubiquitinated by the BCR(KEAP1) complex at Lys-420, increasing SQSTM1 sequestering activity and promoting its degradation. Ubiquitinated via 'Lys-29' and 'Lys-33'-linked polyubiquitination leading to xenophagic targeting of bacteria and inhibition of their replication. Post-translationally, acetylated at Lys-420 and Lys-435 by KAT5/TIP60, promotes activity by destabilizing the UBA dimer interface and increases binding affinity to ubiquitinated proteins. Deacetylated by HDAC6. In terms of processing, palmitoylation at Cys-289 and Cys-290 by ZDHHC19 is required for efficient autophagic degradation of SQSTM1-cargo complexes by promoting affinity for ATG8 proteins and recruitment of p62 bodies to autophagosomes. Dealmitoylated at Cys-289 and Cys-290 by LYPLA1. (Microbial infection) Cleaved by S.pyogenes SpeB protease; leading to its degradation. Degradation by SpeB prevents autophagy, promoting to S.pyogenes intracellular replication. Post-translationally, (Microbial infection) Deubiquitinated by Epstein-Barr virus BPLF1; leading to inhibition of the recruitment of MAP1LC3A/LC3 to SQSTM1-positive structures. Ubiquitously expressed.

The protein resides in the cytoplasmic vesicle. The protein localises to the autophagosome. It is found in the preautophagosomal structure. It localises to the cytoplasm. Its subcellular location is the cytosol. The protein resides in the nucleus. The protein localises to the PML body. It is found in the late endosome. It localises to the lysosome. Its subcellular location is the endoplasmic reticulum. The protein resides in the myofibril. The protein localises to the sarcomere. In terms of biological role, molecular adapter required for selective macroautophagy (aggrephagy) by acting as a bridge between polyubiquitinated proteins and autophagosomes. Promotes the recruitment of ubiquitinated cargo proteins to autophagosomes via multiple domains that bridge proteins and organelles in different steps. SQSTM1 first mediates the assembly and removal of ubiquitinated proteins by undergoing liquid-liquid phase separation upon binding to ubiquitinated proteins via its UBA domain, leading to the formation of insoluble cytoplasmic inclusions, known as p62 bodies. SQSTM1 then interacts with ATG8 family proteins on autophagosomes via its LIR motif, leading to p62 body recruitment to autophagosomes, followed by autophagic clearance of ubiquitinated proteins. SQSTM1 is itself degraded along with its ubiquitinated cargos. Also required to recruit ubiquitinated proteins to PML bodies in the nucleus. Also involved in autophagy of peroxisomes (pexophagy) in response to reactive oxygen species (ROS) by acting as a bridge between ubiquitinated PEX5 receptor and autophagosomes. Acts as an activator of the NFE2L2/NRF2 pathway via interaction with KEAP1: interaction inactivates the BCR(KEAP1) complex by sequestering the complex in inclusion bodies, promoting nuclear accumulation of NFE2L2/NRF2 and subsequent expression of cytoprotective genes. Promotes relocalization of 'Lys-63'-linked ubiquitinated STING1 to autophagosomes. Involved in endosome organization by retaining vesicles in the perinuclear cloud: following ubiquitination by RNF26, attracts specific vesicle-associated adapters, forming a molecular bridge that restrains cognate vesicles in the perinuclear region and organizes the endosomal pathway for efficient cargo transport. Sequesters tensin TNS2 into cytoplasmic puncta, promoting TNS2 ubiquitination and proteasomal degradation. May regulate the activation of NFKB1 by TNF-alpha, nerve growth factor (NGF) and interleukin-1. May play a role in titin/TTN downstream signaling in muscle cells. Adapter that mediates the interaction between TRAF6 and CYLD. In Homo sapiens (Human), this protein is Sequestosome-1.